The primary structure comprises 881 residues: NACHT, LRR and PYD domains-containing protein 6 (881 aa).

The 129-residue stretch at 1 to 129 folds into the Pyrin domain; sequence MDAAGASCSS…EHVLRQHAKV (129 aa). The residue at position 104 (serine 104) is a Phosphoserine. The segment at 154 to 175 is disordered; sequence AGEDELLGTSGEPEPERARRSD. An NACHT domain is found at 194-510; it reads LTVVLQGPAG…EFLAALSYLL (317 aa). 200-207 contributes to the ATP binding site; the sequence is GPAGIGKT. The stretch at 459 to 484 is one LRR 1 repeat; the sequence is EKDLERLKLQGSQVQTMFLSKKELPG. Positions 579 to 611 are disordered; it reads QSQPKVATVGAEKKDELKDEEAEEEEEEEEEEE. Positions 596–611 are enriched in acidic residues; that stretch reads KDEEAEEEEEEEEEEE. LRR repeat units lie at residues 637 to 660, 749 to 772, and 839 to 863; these read LSSLPEMVLERVRLTRMDLEVLSY, APSLRELGLLQNRLTEAGLRLLSQ, and TLSLTSVELTENPLRELQAVKTLKP.

The protein belongs to the NLRP family. As to quaternary structure, homomultimer; forms the NLRP6 inflammasome polymeric complex, a filament composed of homopolymers in response to pathogens and other damage-associated signals. The core of NLRP6 inflammasomes consists of a signal sensor component (NLRP6), an adapter (PYCARD/ASC), which recruits effector pro-inflammatory caspases (CASP1 and CASP4). Interacts (via pyrin domain) with PYCARD/ASC (via pyrin domain); interaction takes place following NLRP6 activation and formation of liquid-liquid phase separation (LLPS), initiating nucleation which greatly enhances further addition of soluble PYCARD/ASC molecules to the speck in a prion-like polymerization process. Clustered PYCARD/ASC nucleates the formation of CASP1 (or possibly CASP4) filaments through the interaction of their respective CARD domains, acting as a platform for CASP1 polymerization. CASP1 filament formation increases local enzyme concentration, resulting in trans-autocleavage and activation. Active CASP1 then processes IL1B and IL18 precursors, leading to the release of mature cytokines in the extracellular milieu and inflammatory response. Interacts with DHX15. Post-translationally, polyubiquitinated with 'Lys-63'-linked chains, promoting the interaction with PYCARD/ASC and formation of the NLRP6 inflammasome. Deubiquitination by CYLD decreases the interaction with PYCARD/ASC. As to expression, detected in several tissues. Expressed in renal epithelial cells in medullary thick ascending limb of Henle, as well as in salivary gland apical epithelium (at protein level). Isoform 1 is widely expressed. Isoform 2 is primarily expressed in kidney (at protein level).

It is found in the cytoplasm. The protein localises to the inflammasome. It localises to the cell membrane. The protein resides in the nucleus membrane. Acts as the sensor component of the NLRP6 inflammasome, which mediates inflammasome activation in response to various pathogen-associated signals, leading to maturation and secretion of IL1B and IL18. Inflammasomes are supramolecular complexes that assemble in the cytosol in response to pathogens and other damage-associated signals and play critical roles in innate immunity and inflammation. Acts as a recognition receptor (PRR): recognizes and binds specific pathogens and other damage-associated signals, such as lipoteichoic acid (LTA), a cell-wall component of Gram-positive bacteria, or double stranded RNA (dsRNA). May also recognize and bind lipopolysaccharide (LPS), a major component of the outer membrane of Gram-negative bacteria; however, LPS is probably not a major activator of the NLRP6 inflammasome. Following LTA- or dsRNA-binding, NLRP6 undergoes liquid-liquid phase separation (LLPS), enhancing multivalent interactions, an essential step for the formation of the NLRP6 inflammasome polymeric complex. The NLRP6 inflammasome acts by promoting recruitment of effector pro-inflammatory caspases (CASP1 and/or CASP4) that catalyze maturation and secretion of IL1B and IL18 in the extracellular milieu. The NLRP6 inflammasome plays a central role in the maintenance of epithelial integrity and host defense against microbial infections in the intestine. Required to restrict infection against Gram-positive bacteria by recognizing lipoteichoic acid (LTA), leading to recruitment of CASP4 and CASP1, and subsequent maturation and secretion of IL1B and IL18. Involved in intestinal antiviral innate immunity together with DHX15: recognizes and binds viral dsRNA to restrict infection by enteric viruses through the interferon pathway and GSDMD-dependent release of IL18. Required to prevent infection by the apicomplexan parasite Cryptosporidium in enterocytes by promoting GSDMD-dependent release of IL18. The NLRP6 inflammasome may also regulate the gut microbiota composition by acting as a sensor of microbiota-associated metabolites to form a PYCARD/ASC-dependent inflammasome for downstream IL18 release and secretion of antimicrobial peptides. Essential for gut mucosal self-renewal and proliferation. Regulate mucus secretion in an inflammasome- and autophagy-dependent manner to prevent invasion by enteric bacteria,. During systemic bacterial infections, the NLRP6 inflammasome negatively regulates neutrophil recruitment and neutrophil extracellular traps (NETs) formation. May promote peripheral nerve recovery following injury via an inflammasome-independent mechanism. The chain is NACHT, LRR and PYD domains-containing protein 6 from Rattus norvegicus (Rat).